The primary structure comprises 214 residues: Superoxide dismutase [Mn] (214 aa).

Residues His27, His82, Asp169, and His173 each coordinate Mn(2+).

This sequence belongs to the iron/manganese superoxide dismutase family. As to quaternary structure, homodimer. Mn(2+) is required as a cofactor.

It carries out the reaction 2 superoxide + 2 H(+) = H2O2 + O2. In terms of biological role, destroys superoxide anion radicals which are normally produced within the cells and which are toxic to biological systems. The protein is Superoxide dismutase [Mn] (sodA) of Pasteurella multocida (strain Pm70).